The primary structure comprises 448 residues: NADH oxidase (448 aa).

FAD-binding positions include 7 to 11 (GSGAA), Cys42, Val80, 110 to 113 (ATGA), and Arg132. The Redox-active role is filled by Cys42. Residues 152–167 (VAVVGAGAIGLEMAYG), Glu179, and Gly243 each bind NAD(+). FAD is bound by residues 271–281 (TSIPNIYAVGD), Gly299, and Thr300. Val328 serves as a coordination point for NAD(+). An FAD-binding site is contributed by Tyr423.

The protein belongs to the class-III pyridine nucleotide-disulfide oxidoreductase family. Requires FAD as cofactor.

It catalyses the reaction 2 NADH + O2 + 2 H(+) = 2 NAD(+) + 2 H2O. In terms of biological role, catalyzes the four-electron reduction of molecular oxygen to water. The protein is NADH oxidase of Methanocaldococcus jannaschii (strain ATCC 43067 / DSM 2661 / JAL-1 / JCM 10045 / NBRC 100440) (Methanococcus jannaschii).